We begin with the raw amino-acid sequence, 697 residues long: uncharacterized protein (697 aa).

14 helical membrane passes run 65–85 (PVRNFIEEGCDGVTDLYVGIY), 106–126 (CTFRTNNVKLGYLIVDELHNF), 131–151 (YRQSQFGGITNLDFDAFEKAI), 163–183 (DAALQRIGLTGLAKKSMDINE), 194–214 (LSSYPTRMFNLIKEKSKVPLG), 227–247 (TSATTTASINVRTSATTTASI), 286–306 (STNATTTESTNASAKEDANKD), 316–336 (PVTDINKEPYKRKGSQMVLLE), 361–381 (SDEIKHLFLYGIDIYFCPEGV), 394–414 (MFELCVCWAGQKVSYRRMAWE), 419–439 (ERMLRNDEEYKEYLEDIEPYH), 450–470 (SVKRREIYSQIQRNYAWYLAI), 487–507 (QGSQVFRMSGRQIKELYYKVW), and 558–578 (TSAGLQGPQYVKLQFSRHHRQ). The tract at residues 246–321 (SINVRTSATT…NRFHPVTDIN (76 aa)) is disordered. The span at 251-298 (TSATTTESTNSNTNATTTESTNSSTNATTTASTNSSTNATTTESTNAS) shows a compositional bias: low complexity. Residues 299-321 (AKEDANKDGNAEDNRFHPVTDIN) show a composition bias toward basic and acidic residues.

It is found in the membrane. This is an uncharacterized protein from Saccharomyces cerevisiae (strain ATCC 204508 / S288c) (Baker's yeast).